Here is a 289-residue protein sequence, read N- to C-terminus: Bifunctional protein FolD 2 (289 aa).

NADP(+) is bound by residues Gly-162 to Ser-164, Ser-187, and Ile-228.

It belongs to the tetrahydrofolate dehydrogenase/cyclohydrolase family. Homodimer.

It carries out the reaction (6R)-5,10-methylene-5,6,7,8-tetrahydrofolate + NADP(+) = (6R)-5,10-methenyltetrahydrofolate + NADPH. The enzyme catalyses (6R)-5,10-methenyltetrahydrofolate + H2O = (6R)-10-formyltetrahydrofolate + H(+). Its pathway is one-carbon metabolism; tetrahydrofolate interconversion. Catalyzes the oxidation of 5,10-methylenetetrahydrofolate to 5,10-methenyltetrahydrofolate and then the hydrolysis of 5,10-methenyltetrahydrofolate to 10-formyltetrahydrofolate. In Deinococcus geothermalis (strain DSM 11300 / CIP 105573 / AG-3a), this protein is Bifunctional protein FolD 2.